Reading from the N-terminus, the 387-residue chain is S-adenosylmethionine synthase (387 aa).

His16 contacts ATP. Asp18 provides a ligand contact to Mg(2+). Residue Glu44 coordinates K(+). Residues Glu57 and Gln100 each contribute to the L-methionine site. Residues 100–110 (QSPDIAQGVDR) are flexible loop. Residues 167 to 169 (DAK), 232 to 233 (RF), Asp241, 247 to 248 (RK), Ala264, and Lys268 contribute to the ATP site. Asp241 serves as a coordination point for L-methionine. Residue Lys272 coordinates L-methionine.

It belongs to the AdoMet synthase family. As to quaternary structure, homotetramer; dimer of dimers. Requires Mg(2+) as cofactor. It depends on K(+) as a cofactor.

It is found in the cytoplasm. It catalyses the reaction L-methionine + ATP + H2O = S-adenosyl-L-methionine + phosphate + diphosphate. It functions in the pathway amino-acid biosynthesis; S-adenosyl-L-methionine biosynthesis; S-adenosyl-L-methionine from L-methionine: step 1/1. Its function is as follows. Catalyzes the formation of S-adenosylmethionine (AdoMet) from methionine and ATP. The overall synthetic reaction is composed of two sequential steps, AdoMet formation and the subsequent tripolyphosphate hydrolysis which occurs prior to release of AdoMet from the enzyme. This chain is S-adenosylmethionine synthase, found in Cupriavidus pinatubonensis (strain JMP 134 / LMG 1197) (Cupriavidus necator (strain JMP 134)).